The following is a 728-amino-acid chain: Elongation factor 2 (728 aa).

Positions 18–258 (KFIRNIGIVA…MVIRHLPSPI (241 aa)) constitute a tr-type G domain. GTP contacts are provided by residues 27–34 (AHIDHGKT), 93–97 (DTPGH), and 147–150 (NKVD). A Diphthamide modification is found at histidine 594.

It belongs to the TRAFAC class translation factor GTPase superfamily. Classic translation factor GTPase family. EF-G/EF-2 subfamily.

The protein resides in the cytoplasm. Catalyzes the GTP-dependent ribosomal translocation step during translation elongation. During this step, the ribosome changes from the pre-translocational (PRE) to the post-translocational (POST) state as the newly formed A-site-bound peptidyl-tRNA and P-site-bound deacylated tRNA move to the P and E sites, respectively. Catalyzes the coordinated movement of the two tRNA molecules, the mRNA and conformational changes in the ribosome. The sequence is that of Elongation factor 2 (fusA) from Archaeoglobus fulgidus (strain ATCC 49558 / DSM 4304 / JCM 9628 / NBRC 100126 / VC-16).